The primary structure comprises 346 residues: UDP-3-O-acylglucosamine N-acyltransferase (346 aa).

His253 serves as the catalytic Proton acceptor.

This sequence belongs to the transferase hexapeptide repeat family. LpxD subfamily. As to quaternary structure, homotrimer.

The catalysed reaction is a UDP-3-O-[(3R)-3-hydroxyacyl]-alpha-D-glucosamine + a (3R)-hydroxyacyl-[ACP] = a UDP-2-N,3-O-bis[(3R)-3-hydroxyacyl]-alpha-D-glucosamine + holo-[ACP] + H(+). It functions in the pathway bacterial outer membrane biogenesis; LPS lipid A biosynthesis. In terms of biological role, catalyzes the N-acylation of UDP-3-O-acylglucosamine using 3-hydroxyacyl-ACP as the acyl donor. Is involved in the biosynthesis of lipid A, a phosphorylated glycolipid that anchors the lipopolysaccharide to the outer membrane of the cell. The polypeptide is UDP-3-O-acylglucosamine N-acyltransferase (Rickettsia peacockii (strain Rustic)).